A 397-amino-acid polypeptide reads, in one-letter code: Elongation factor Tu 1 (397 aa).

The tr-type G domain maps to 10–207 (KPHVNVGTIG…TLDSYIPEPV (198 aa)). The G1 stretch occupies residues 19 to 26 (GHVDHGKT). GTP is bound at residue 19 to 26 (GHVDHGKT). Thr-26 is a binding site for Mg(2+). The tract at residues 60 to 64 (GITIN) is G2. The G3 stretch occupies residues 81–84 (DCPG). GTP-binding positions include 81 to 85 (DCPGH) and 136 to 139 (NKAD). A G4 region spans residues 136-139 (NKAD). The interval 174–176 (SAL) is G5.

The protein belongs to the TRAFAC class translation factor GTPase superfamily. Classic translation factor GTPase family. EF-Tu/EF-1A subfamily. As to quaternary structure, monomer.

The protein localises to the cytoplasm. It catalyses the reaction GTP + H2O = GDP + phosphate + H(+). Its function is as follows. GTP hydrolase that promotes the GTP-dependent binding of aminoacyl-tRNA to the A-site of ribosomes during protein biosynthesis. This is Elongation factor Tu 1 from Stutzerimonas stutzeri (strain A1501) (Pseudomonas stutzeri).